Here is a 493-residue protein sequence, read N- to C-terminus: NADH-ubiquinone oxidoreductase 51 kDa subunit, mitochondrial (493 aa).

Residues 1 to 27 (MLSRTAAPTKASARTLSRAAAEQCRTF) constitute a mitochondrion transit peptide. Position 96–105 (96–105 (GRGGAGFPSG)) interacts with NAD(+). Position 212-259 (212-259 (GAGAYVCGEETSLIESLEGKPGKPRLKPPFPAAVGLFGCPSTVANVET)) interacts with FMN. Residues C391, C394, C397, and C437 each contribute to the [4Fe-4S] cluster site.

The protein belongs to the complex I 51 kDa subunit family. As to quaternary structure, complex I is composed of about 40 different subunits. This is a component of the flavoprotein-sulfur (FP) fragment of the enzyme. It depends on FMN as a cofactor. Requires [4Fe-4S] cluster as cofactor.

The protein localises to the mitochondrion inner membrane. It carries out the reaction a ubiquinone + NADH + 5 H(+)(in) = a ubiquinol + NAD(+) + 4 H(+)(out). Core subunit of the mitochondrial membrane respiratory chain NADH dehydrogenase (Complex I) that is believed to belong to the minimal assembly required for catalysis. Complex I functions in the transfer of electrons from NADH to the respiratory chain. The immediate electron acceptor for the enzyme is believed to be ubiquinone. The polypeptide is NADH-ubiquinone oxidoreductase 51 kDa subunit, mitochondrial (nuo-51) (Neurospora crassa (strain ATCC 24698 / 74-OR23-1A / CBS 708.71 / DSM 1257 / FGSC 987)).